Reading from the N-terminus, the 513-residue chain is Dye-decolorizing peroxidase msp1 (513 aa).

An N-terminal signal peptide occupies residues 1 to 20; that stretch reads MKLFSASVFAAIIASHYASA. Residues 21-55 constitute a propeptide that is removed on maturation; the sequence is TAHIRAPNVKPRRTNSLLTAPPQQPPLPSAQQAAS. Residues 33–52 form a disordered region; the sequence is RTNSLLTAPPQQPPLPSAQQ. Asp228 (proton acceptor) is an active-site residue. Residue His365 coordinates heme.

In terms of assembly, homodimer. The cofactor is heme b.

The protein localises to the secreted. The enzyme catalyses Reactive Blue 5 + 2 H2O2 = 2,2'-disulfonyl azobenzene + 3-[(4-amino-6-chloro-1,3,5-triazin-2-yl)amino]benzenesulfonate + phthalate + 2 H2O + 2 H(+). It carries out the reaction 2 a phenolic donor + H2O2 = 2 a phenolic radical donor + 2 H2O. Functionally, manganese-independent peroxidase that is able to convert a large number of compounds, but its physiological substrate is not known. In addition to classic peroxidase substrates (e.g. 2,6-dimethoxyphenol), oxidizes dyes such as Reactive Blue 5. Also degrades beta-carotene. This chain is Dye-decolorizing peroxidase msp1, found in Mycetinis scorodonius (Garlic mushroom).